We begin with the raw amino-acid sequence, 326 residues long: GTP 3',8-cyclase (326 aa).

The region spanning 7 to 232 (GFGRSFPYLR…PRAADAGPAR (226 aa)) is the Radical SAM core domain. Arg-16 provides a ligand contact to GTP. The [4Fe-4S] cluster site is built by Cys-23 and Cys-27. Tyr-29 contributes to the S-adenosyl-L-methionine binding site. Cys-30 is a binding site for [4Fe-4S] cluster. Arg-65 is a binding site for GTP. Gly-69 is an S-adenosyl-L-methionine binding site. Residue Thr-96 participates in GTP binding. S-adenosyl-L-methionine is bound at residue Ser-120. Position 157 (Lys-157) interacts with GTP. Met-191 provides a ligand contact to S-adenosyl-L-methionine. Residues Cys-254 and Cys-257 each contribute to the [4Fe-4S] cluster site. Position 259–261 (259–261 (RLR)) interacts with GTP. Cys-271 lines the [4Fe-4S] cluster pocket.

This sequence belongs to the radical SAM superfamily. MoaA family. As to quaternary structure, monomer and homodimer. The cofactor is [4Fe-4S] cluster.

It carries out the reaction GTP + AH2 + S-adenosyl-L-methionine = (8S)-3',8-cyclo-7,8-dihydroguanosine 5'-triphosphate + 5'-deoxyadenosine + L-methionine + A + H(+). It functions in the pathway cofactor biosynthesis; molybdopterin biosynthesis. In terms of biological role, catalyzes the cyclization of GTP to (8S)-3',8-cyclo-7,8-dihydroguanosine 5'-triphosphate. In Stenotrophomonas maltophilia (strain K279a), this protein is GTP 3',8-cyclase.